Reading from the N-terminus, the 700-residue chain is Tectonic-2 (700 aa).

Residues 1–25 (MGSLSPLSFLWGLLLLQGVLRPLRG) form the signal peptide. Topologically, residues 26–665 (DPVFIPPFIR…YYQGEPRPQC (640 aa)) are extracellular. Asn-76, Asn-82, Asn-146, Asn-156, and Asn-389 each carry an N-linked (GlcNAc...) asparagine glycan. A helical transmembrane segment spans residues 666 to 682 (VAKGLMLLSLLMLAILL). Residues 683–700 (RHPWVGMCKAWSSASIQH) lie on the Cytoplasmic side of the membrane.

It belongs to the tectonic family. Part of the tectonic-like complex (also named B9 complex).

It is found in the membrane. It localises to the cytoplasm. The protein resides in the cytoskeleton. The protein localises to the cilium basal body. Functionally, component of the tectonic-like complex, a complex localized at the transition zone of primary cilia and acting as a barrier that prevents diffusion of transmembrane proteins between the cilia and plasma membranes. Required for hedgehog signaling transduction. This is Tectonic-2 (Tctn2) from Rattus norvegicus (Rat).